Here is a 343-residue protein sequence, read N- to C-terminus: Zinc finger CCCH domain-containing protein 1 (343 aa).

The interval Met-1 to Ser-102 is disordered. Positions Pro-7–Gln-25 are enriched in low complexity. A compositionally biased stretch (basic residues) spans Lys-35–Lys-44. Low complexity predominate over residues Ser-79–Gly-91. The segment at Asp-200–Gly-228 adopts a C3H1-type zinc-finger fold. The tract at residues Arg-249 to Glu-268 is disordered. Over residues Val-255–Glu-268 the composition is skewed to acidic residues. The RING-type zinc-finger motif lies at Cys-277–Asn-315.

The sequence is that of Zinc finger CCCH domain-containing protein 1 from Arabidopsis thaliana (Mouse-ear cress).